The sequence spans 594 residues: Arginine--tRNA ligase (594 aa).

Residues 133–143 (ANPTGPMNIVS) carry the 'HIGH' region motif.

The protein belongs to the class-I aminoacyl-tRNA synthetase family. As to quaternary structure, monomer.

The protein localises to the cytoplasm. It carries out the reaction tRNA(Arg) + L-arginine + ATP = L-arginyl-tRNA(Arg) + AMP + diphosphate. The chain is Arginine--tRNA ligase from Leptospira biflexa serovar Patoc (strain Patoc 1 / Ames).